Reading from the N-terminus, the 274-residue chain is Mitochondrial outer membrane protein porin 1 (274 aa).

This sequence belongs to the eukaryotic mitochondrial porin (TC 1.B.8.1) family. As to expression, expressed in shoots and roots. Also expressed in callus, leaves, panicles, sheaths and stems.

The protein resides in the mitochondrion outer membrane. In terms of biological role, forms a channel through the mitochondrial outer membrane that allows diffusion of small hydrophilic molecules. The channel adopts an open conformation at low or zero membrane potential and a closed conformation at potentials above 30-40 mV. The open state has a weak anion selectivity whereas the closed state is cation-selective. The chain is Mitochondrial outer membrane protein porin 1 (VDAC1) from Oryza sativa subsp. japonica (Rice).